Consider the following 124-residue polypeptide: Small ribosomal subunit protein uS13 (124 aa).

The disordered stretch occupies residues 94 to 124; it reads RGMPVRGQRTKTNARTRKGPKRTIAGKKKAR.

It belongs to the universal ribosomal protein uS13 family. As to quaternary structure, part of the 30S ribosomal subunit. Forms a loose heterodimer with protein S19. Forms two bridges to the 50S subunit in the 70S ribosome.

Located at the top of the head of the 30S subunit, it contacts several helices of the 16S rRNA. In the 70S ribosome it contacts the 23S rRNA (bridge B1a) and protein L5 of the 50S subunit (bridge B1b), connecting the 2 subunits; these bridges are implicated in subunit movement. Contacts the tRNAs in the A and P-sites. The polypeptide is Small ribosomal subunit protein uS13 (Mycobacterium tuberculosis (strain ATCC 25177 / H37Ra)).